Reading from the N-terminus, the 387-residue chain is Cobalt-precorrin-5B C(1)-methyltransferase (387 aa).

The protein belongs to the CbiD family.

It catalyses the reaction Co-precorrin-5B + S-adenosyl-L-methionine = Co-precorrin-6A + S-adenosyl-L-homocysteine. It participates in cofactor biosynthesis; adenosylcobalamin biosynthesis; cob(II)yrinate a,c-diamide from sirohydrochlorin (anaerobic route): step 6/10. In terms of biological role, catalyzes the methylation of C-1 in cobalt-precorrin-5B to form cobalt-precorrin-6A. The sequence is that of Cobalt-precorrin-5B C(1)-methyltransferase from Desulfitobacterium hafniense (strain Y51).